Reading from the N-terminus, the 212-residue chain is Pyridoxine/pyridoxamine 5'-phosphate oxidase (212 aa).

Positions 1 to 20 (MSDSAMEPQNPLTSGDFTAA) are disordered. FMN is bound by residues 59–64 (RMVLLK), 74–75 (YT), Lys81, and Gln103. Position 64 (Lys64) interacts with substrate. Residues Tyr121, Arg125, and Ser129 each coordinate substrate. FMN contacts are provided by residues 138–139 (QS) and Trp183. Position 189 to 191 (189 to 191 (RLH)) interacts with substrate. Arg193 contributes to the FMN binding site.

The protein belongs to the pyridoxamine 5'-phosphate oxidase family. Homodimer. Requires FMN as cofactor.

It carries out the reaction pyridoxamine 5'-phosphate + O2 + H2O = pyridoxal 5'-phosphate + H2O2 + NH4(+). It catalyses the reaction pyridoxine 5'-phosphate + O2 = pyridoxal 5'-phosphate + H2O2. It functions in the pathway cofactor metabolism; pyridoxal 5'-phosphate salvage; pyridoxal 5'-phosphate from pyridoxamine 5'-phosphate: step 1/1. Its pathway is cofactor metabolism; pyridoxal 5'-phosphate salvage; pyridoxal 5'-phosphate from pyridoxine 5'-phosphate: step 1/1. Its function is as follows. Catalyzes the oxidation of either pyridoxine 5'-phosphate (PNP) or pyridoxamine 5'-phosphate (PMP) into pyridoxal 5'-phosphate (PLP). The sequence is that of Pyridoxine/pyridoxamine 5'-phosphate oxidase from Azorhizobium caulinodans (strain ATCC 43989 / DSM 5975 / JCM 20966 / LMG 6465 / NBRC 14845 / NCIMB 13405 / ORS 571).